The chain runs to 224 residues: Glycerol-3-phosphate acyltransferase (224 aa).

Helical transmembrane passes span 4–24 (FVIV…GSIN), 60–80 (LVIF…VYFV), 88–108 (SVVV…FPIW), 124–144 (IISV…LIII), 149–169 (IVSF…FIPW), and 182–202 (WPWW…IWSH).

It belongs to the PlsY family. As to quaternary structure, probably interacts with PlsX.

Its subcellular location is the cell membrane. The catalysed reaction is an acyl phosphate + sn-glycerol 3-phosphate = a 1-acyl-sn-glycero-3-phosphate + phosphate. It functions in the pathway lipid metabolism; phospholipid metabolism. In terms of biological role, catalyzes the transfer of an acyl group from acyl-phosphate (acyl-PO(4)) to glycerol-3-phosphate (G3P) to form lysophosphatidic acid (LPA). This enzyme utilizes acyl-phosphate as fatty acyl donor, but not acyl-CoA or acyl-ACP. In Mycoplasmopsis pulmonis (strain UAB CTIP) (Mycoplasma pulmonis), this protein is Glycerol-3-phosphate acyltransferase.